A 249-amino-acid chain; its full sequence is Expansin-A19 (249 aa).

A signal peptide spans 1–21 (MGNIFLQLLAVVALCIAPARS). An Expansin-like EG45 domain is found at 41 to 154 (GGACGYGNLY…QQVKCWRYGG (114 aa)). Residues Asn116 and Asn216 are each glycosylated (N-linked (GlcNAc...) asparagine). In terms of domain architecture, Expansin-like CBD spans 164-243 (YFELVLVTNM…GWSFGQTFST (80 aa)).

It belongs to the expansin family. Expansin A subfamily.

It localises to the secreted. The protein localises to the cell wall. The protein resides in the membrane. In terms of biological role, may cause loosening and extension of plant cell walls by disrupting non-covalent bonding between cellulose microfibrils and matrix glucans. No enzymatic activity has been found. May be required for rapid internodal elongation in deepwater rice during submergence. This Oryza sativa subsp. japonica (Rice) protein is Expansin-A19 (EXPA19).